The chain runs to 312 residues: MNWMELSIVVNHEVEYDVTEILESYGSNGVVIEDSNILEEQPVDKFGEIYDLNPEDYPEKGVRLKAYFNEFTYNENLKSNINYEILSLQQIDKTIYDYQEKLIAEVDWENEWKNYFHPFRASKQFTIVPSWESYVKENDNELCIELDPGMAFGTGDHPTTSMCLKAIETFVKPTDSVIDVGTGSGILSIASHLLGVQRIKALDIDEMAVNVAKENFKKNHCDDAIEAVPGNLLKNENEKFNIVIANILAHIIEEMIEDTYNTLIEDGYFITSGIIEEKYQDIESQMKRIGFKIISVEHDNGWVCIVGQKVSG.

The S-adenosyl-L-methionine site is built by Thr-160, Gly-181, Asp-203, and Asn-246.

Belongs to the methyltransferase superfamily. PrmA family.

It is found in the cytoplasm. The catalysed reaction is L-lysyl-[protein] + 3 S-adenosyl-L-methionine = N(6),N(6),N(6)-trimethyl-L-lysyl-[protein] + 3 S-adenosyl-L-homocysteine + 3 H(+). Its function is as follows. Methylates ribosomal protein L11. This Staphylococcus epidermidis (strain ATCC 12228 / FDA PCI 1200) protein is Ribosomal protein L11 methyltransferase.